Here is a 572-residue protein sequence, read N- to C-terminus: 2-succinyl-5-enolpyruvyl-6-hydroxy-3-cyclohexene-1-carboxylate synthase (572 aa).

This sequence belongs to the TPP enzyme family. MenD subfamily. As to quaternary structure, homodimer. Mg(2+) serves as cofactor. Mn(2+) is required as a cofactor. It depends on thiamine diphosphate as a cofactor.

The enzyme catalyses isochorismate + 2-oxoglutarate + H(+) = 5-enolpyruvoyl-6-hydroxy-2-succinyl-cyclohex-3-ene-1-carboxylate + CO2. The protein operates within quinol/quinone metabolism; 1,4-dihydroxy-2-naphthoate biosynthesis; 1,4-dihydroxy-2-naphthoate from chorismate: step 2/7. It functions in the pathway quinol/quinone metabolism; menaquinone biosynthesis. Its function is as follows. Catalyzes the thiamine diphosphate-dependent decarboxylation of 2-oxoglutarate and the subsequent addition of the resulting succinic semialdehyde-thiamine pyrophosphate anion to isochorismate to yield 2-succinyl-5-enolpyruvyl-6-hydroxy-3-cyclohexene-1-carboxylate (SEPHCHC). The sequence is that of 2-succinyl-5-enolpyruvyl-6-hydroxy-3-cyclohexene-1-carboxylate synthase from Vibrio campbellii (strain ATCC BAA-1116).